The following is a 494-amino-acid chain: Alpha-amylase-related protein (494 aa).

The N-terminal stretch at 1 to 20 (MIKFALALTLCLAGASLSLA) is a signal peptide. Residue Q21 is modified to Pyrrolidone carboxylic acid. Residues C48 and C104 are joined by a disulfide bond. Residues N118, Q169, and D178 each contribute to the Ca(2+) site. C157 and C171 are joined by a disulfide. A chloride-binding site is contributed by R206. The active-site Nucleophile is D208. H212 lines the Ca(2+) pocket. The active-site Proton donor is E245. Residues N308 and R343 each contribute to the chloride site. Intrachain disulfides connect C376/C382, C418/C441, and C448/C460.

Belongs to the glycosyl hydrolase 13 family. In terms of assembly, monomer. It depends on Ca(2+) as a cofactor. The cofactor is chloride.

The protein localises to the secreted. The catalysed reaction is Endohydrolysis of (1-&gt;4)-alpha-D-glucosidic linkages in polysaccharides containing three or more (1-&gt;4)-alpha-linked D-glucose units.. The chain is Alpha-amylase-related protein (Amyrel) from Drosophila bocqueti (Fruit fly).